The following is a 390-amino-acid chain: Chorismate synthase (390 aa).

The NADP(+) site is built by Arg-48 and Arg-54. FMN is bound by residues 125–127, 238–239, Gly-278, 293–297, and Arg-319; these read RSS, NA, and KPTSS. The segment at 360–390 is disordered; that stretch reads KVPGNIINPTNPVTTQPDVRRAEDPEPDENS. Residues 366–376 show a composition bias toward polar residues; sequence INPTNPVTTQP.

Belongs to the chorismate synthase family. Homotetramer. It depends on FMNH2 as a cofactor.

It carries out the reaction 5-O-(1-carboxyvinyl)-3-phosphoshikimate = chorismate + phosphate. It participates in metabolic intermediate biosynthesis; chorismate biosynthesis; chorismate from D-erythrose 4-phosphate and phosphoenolpyruvate: step 7/7. Functionally, catalyzes the anti-1,4-elimination of the C-3 phosphate and the C-6 proR hydrogen from 5-enolpyruvylshikimate-3-phosphate (EPSP) to yield chorismate, which is the branch point compound that serves as the starting substrate for the three terminal pathways of aromatic amino acid biosynthesis. This reaction introduces a second double bond into the aromatic ring system. The protein is Chorismate synthase of Nitrosomonas eutropha (strain DSM 101675 / C91 / Nm57).